We begin with the raw amino-acid sequence, 92 residues long: Plasmid copy control protein CopR (92 aa).

A compositionally biased stretch (basic and acidic residues) spans 1-27 (MELAFRESLKKMRGTKSKEKFSQELEM). Disordered stretches follow at residues 1 to 40 (MELAFRESLKKMRGTKSKEKFSQELEMSRSNYSRIESGKS) and 63 to 92 (IPNEPTEPEPETEQVTLELEMEEEKSNDFV). One can recognise an HTH cro/C1-type domain in the interval 9–62 (LKKMRGTKSKEKFSQELEMSRSNYSRIESGKSDPTIKTLEQIVKLTNSTLVVDL). A DNA-binding region (H-T-H motif) is located at residues 20 to 39 (KFSQELEMSRSNYSRIESGK).

Functionally, involved in copy control of plasmid pIP501. In Streptococcus agalactiae, this protein is Plasmid copy control protein CopR (copR).